We begin with the raw amino-acid sequence, 343 residues long: Thromboxane A2 receptor (343 aa).

The Extracellular segment spans residues 1 to 29 (MWPNGSSLGPCFRPTNITLEERRLIASPW). N-linked (GlcNAc...) asparagine glycans are attached at residues Asn4 and Asn16. The chain crosses the membrane as a helical span at residues 30–52 (FAASFCVVGLASNLLALSVLAGA). Over 53 to 66 (RQGGSHTRSSFLTF) the chain is Cytoplasmic. A helical membrane pass occupies residues 67–87 (LCGLVLTDFLGLLVTGTIVVS). The Extracellular segment spans residues 88–106 (QHAALFEWHAVDPGCRLCR). Residues Cys105 and Cys183 are joined by a disulfide bond. Residues 107 to 128 (FMGVVMIFFGLSPLLLGAAMAS) traverse the membrane as a helical segment. Residues 129–149 (ERYLGITRPFSRPAVASQRRA) lie on the Cytoplasmic side of the membrane. Residues 150-172 (WATVGLVWAAALALGLLPLLGVG) form a helical membrane-spanning segment. Over 173–193 (RYTVQYPGSWCFLTLGAESGD) the chain is Extracellular. Residues 194 to 219 (VAFGLLFSMLGGLSVGLSFLLNTVSV) traverse the membrane as a helical segment. Over 220–246 (ATLCHVYHGQEAAQQRPRDSEVEMMAQ) the chain is Cytoplasmic. A helical transmembrane segment spans residues 247–270 (LLGIMVVASVCWLPLLVFIAQTVL). Residues 271 to 289 (RNPPAMSPAGQLSRTTEKE) lie on the Extracellular side of the membrane. The helical transmembrane segment at 290 to 311 (LLIYLRVATWNQILDPWVYILF) threads the bilayer. The Cytoplasmic portion of the chain corresponds to 312–343 (RRAVLRRLQPRLSTRPRSLSLQPQLTQRSGLQ). Residues Ser329 and Ser331 each carry the phosphoserine modification.

Belongs to the G-protein coupled receptor 1 family. Interacts with RPGRIP1L. Interacts with PSMA3. Interacts with RACK1; the interaction regulates TBXA2R cell surface expression.

Its subcellular location is the cell membrane. In terms of biological role, receptor for thromboxane A2 (TXA2), a potent stimulator of platelet aggregation. The activity of this receptor is mediated by a G-protein that activates a phosphatidylinositol-calcium second messenger system. In the kidney, the binding of TXA2 to glomerular TP receptors causes intense vasoconstriction. Activates phospholipase C. Its function is as follows. Activates adenylyl cyclase. Functionally, inhibits adenylyl cyclase. This Homo sapiens (Human) protein is Thromboxane A2 receptor (TBXA2R).